Consider the following 299-residue polypeptide: MKALDYKLLLALDAVMQEQNFERAAQRLHITQSAISQRIKQLEQQFAEPLLIRSQPLQATPLGQKLLAHYRQVRQLELELAGEIAPDEPQAPIRVSIAVNADSLATWFLPALAPLLEQHPIELNLLVDDECRTLDRVREGQAFGAVSLHGQPLAGCCVDELGEMRYLLTASPAFVARHFPAGLTPAALAKTPAVAFDQRDDMHVSFMARHFGLEPGGYPCHTVRSSEAFVAMAEQGLAYCLIPELQIRQQLAQGILLDLSPSHHLIEPLYWHRWVLERGLHKQISQRLISEGRRALQPG.

One can recognise an HTH lysR-type domain in the interval 4–60 (LDYKLLLALDAVMQEQNFERAAQRLHITQSAISQRIKQLEQQFAEPLLIRSQPLQAT). The segment at residues 21-40 (FERAAQRLHITQSAISQRIK) is a DNA-binding region (H-T-H motif).

It belongs to the LysR transcriptional regulatory family. Homodimer.

In terms of biological role, controls the transcription of genes involved in arginine and lysine metabolism. In Aeromonas salmonicida, this protein is HTH-type transcriptional regulator ArgP.